The sequence spans 319 residues: D-ribose/D-allose-binding protein (319 aa).

The N-terminal stretch at 1 to 29 (MKRVASRRLLAAVVLTACSSFLPLSAVHA) is a signal peptide.

This sequence belongs to the bacterial solute-binding protein 2 family.

The protein localises to the periplasm. Functionally, binds specifically both D-ribose and D-allose, with affinities in the lower micromolar range. The chain is D-ribose/D-allose-binding protein from Pseudomonas aeruginosa (strain ATCC 15692 / DSM 22644 / CIP 104116 / JCM 14847 / LMG 12228 / 1C / PRS 101 / PAO1).